Reading from the N-terminus, the 485-residue chain is Malonate-semialdehyde dehydrogenase (485 aa).

Residues phenylalanine 155, lysine 179, glutamate 182, arginine 183, and serine 232 each coordinate NAD(+). Catalysis depends on cysteine 287, which acts as the Nucleophile. Glutamate 386 is an NAD(+) binding site.

The protein belongs to the aldehyde dehydrogenase family. IolA subfamily. In terms of assembly, homotetramer.

The enzyme catalyses 3-oxopropanoate + NAD(+) + CoA + H2O = hydrogencarbonate + acetyl-CoA + NADH + H(+). The catalysed reaction is 2-methyl-3-oxopropanoate + NAD(+) + CoA + H2O = propanoyl-CoA + hydrogencarbonate + NADH + H(+). It functions in the pathway polyol metabolism; myo-inositol degradation into acetyl-CoA; acetyl-CoA from myo-inositol: step 7/7. In terms of biological role, catalyzes the oxidation of malonate semialdehyde (MSA) and methylmalonate semialdehyde (MMSA) into acetyl-CoA and propanoyl-CoA, respectively. Is involved in a myo-inositol catabolic pathway. Bicarbonate, and not CO2, is the end-product of the enzymatic reaction. This is Malonate-semialdehyde dehydrogenase from Halalkalibacterium halodurans (strain ATCC BAA-125 / DSM 18197 / FERM 7344 / JCM 9153 / C-125) (Bacillus halodurans).